The following is a 154-amino-acid chain: RING finger protein 11 (154 aa).

Positions 1-12 are enriched in polar residues; the sequence is MGNCLKSPTSDD. A disordered region spans residues 1-52; sequence MGNCLKSPTSDDISLLHESQSDRASFGEGTEPDQEPPPPYQEQVPVPIYHPT. The N-myristoyl glycine moiety is linked to residue glycine 2. Residue cysteine 4 is the site of S-palmitoyl cysteine attachment. Residues serine 14 and serine 25 each carry the phosphoserine modification. Residues 37–40 carry the PPxY motif motif; sequence PPPY. An RING-type zinc finger spans residues 99–140; sequence CVICMMDFVYGDPIRFLPCMHIYHLDCIDDWLMRSFTCPSCM. A Phosphothreonine; by PKB/AKT1 modification is found at threonine 135.

In terms of assembly, interacts (when phosphorylated) with 14-3-3. Interacts with the E3 ubiquitin-ligases NEDD4, ITCH, SMURF2 and WWP1. Also interacts with the E2 ubiquitin-conjugating enzymes UBE2D1 and UBE2N, but neither with CDC34, nor with UBE2L3. Interacts with ZNF350, EPS15 and STAMBP. After TNF stimulation, interacts with TAX1BP1, TNFAIP3 and RIPK1; these interactions are transient and they are lost after 1 hour of stimulation with TNF. Interacts with GGA1. In terms of processing, ubiquitinated in the presence of ITCH, SMURF2 and UBE2D1, as well as WWP1. Post-translationally, phosphorylation by PKB/AKT1 may accelerate degradation by the proteasome. Acylation at both Gly-2 and Cys-4 is required for proper localization to the endosomes.

The protein localises to the early endosome. It is found in the recycling endosome. The protein resides in the cytoplasm. Its subcellular location is the nucleus. In terms of biological role, essential component of a ubiquitin-editing protein complex, comprising also TNFAIP3, ITCH and TAX1BP1, that ensures the transient nature of inflammatory signaling pathways. Promotes the association of TNFAIP3 to RIPK1 after TNF stimulation. TNFAIP3 deubiquitinates 'Lys-63' polyubiquitin chains on RIPK1 and catalyzes the formation of 'Lys-48'-polyubiquitin chains. This leads to RIPK1 proteasomal degradation and consequently termination of the TNF- or LPS-mediated activation of NF-kappa-B. Recruits STAMBP to the E3 ubiquitin-ligase SMURF2 for ubiquitination, leading to its degradation by the 26S proteasome. This Mus musculus (Mouse) protein is RING finger protein 11 (Rnf11).